A 97-amino-acid polypeptide reads, in one-letter code: DNA-directed RNA polymerase subunit omega (97 aa).

It belongs to the RNA polymerase subunit omega family. The RNAP catalytic core consists of 2 alpha, 1 beta, 1 beta' and 1 omega subunit. When a sigma factor is associated with the core the holoenzyme is formed, which can initiate transcription.

It carries out the reaction RNA(n) + a ribonucleoside 5'-triphosphate = RNA(n+1) + diphosphate. Functionally, promotes RNA polymerase assembly. Latches the N- and C-terminal regions of the beta' subunit thereby facilitating its interaction with the beta and alpha subunits. The chain is DNA-directed RNA polymerase subunit omega from Coxiella burnetii (strain CbuK_Q154) (Coxiella burnetii (strain Q154)).